Consider the following 290-residue polypeptide: Phosphoribosylaminoimidazole-succinocarboxamide synthase (290 aa).

Belongs to the SAICAR synthetase family.

The catalysed reaction is 5-amino-1-(5-phospho-D-ribosyl)imidazole-4-carboxylate + L-aspartate + ATP = (2S)-2-[5-amino-1-(5-phospho-beta-D-ribosyl)imidazole-4-carboxamido]succinate + ADP + phosphate + 2 H(+). Its pathway is purine metabolism; IMP biosynthesis via de novo pathway; 5-amino-1-(5-phospho-D-ribosyl)imidazole-4-carboxamide from 5-amino-1-(5-phospho-D-ribosyl)imidazole-4-carboxylate: step 1/2. This is Phosphoribosylaminoimidazole-succinocarboxamide synthase from Haemophilus influenzae (strain PittGG).